The primary structure comprises 221 residues: Bcl-2-related ovarian killer protein homolog A (221 aa).

The BH4 signature appears at K32 to H44. The BH3 motif lies at V64–P80. The BH1 signature appears at E110–G140. The BH2 motif lies at W173 to V187. A helical transmembrane segment spans residues W198–L218.

This sequence belongs to the Bcl-2 family. Strongest expression in ovary and eye, weaker expression in gut, kidney and brain. Little expression in liver or heart.

Its subcellular location is the membrane. Functionally, may play a role in apoptosis. Does not appear to show pro-apoptotic activity when expressed ectopically in early embryos. This is Bcl-2-related ovarian killer protein homolog A from Danio rerio (Zebrafish).